Reading from the N-terminus, the 269-residue chain is RBPJ-interacting and tubulin-associated protein 1 (269 aa).

The Nuclear export signal motif lies at Val5 to Val17. Disordered stretches follow at residues Gly67 to Pro94 and Pro145 to Lys269. Low complexity predominate over residues Ser79 to Thr93. The Nuclear localization signal signature appears at Leu92–Ser108. The segment at Trp128–Pro156 is interaction with RBPJ/RBPSUH. The interval Pro156 to Lys269 is interaction with tubulin. Composition is skewed to polar residues over residues Leu202–Thr220 and Val247–Lys269.

It belongs to the RITA family. As to quaternary structure, interacts with RBPJ/RBPSUH.

It is found in the cytoplasm. The protein localises to the nucleus. The protein resides in the cytoskeleton. Its subcellular location is the microtubule organizing center. It localises to the centrosome. Its function is as follows. Tubulin-binding protein that acts as a negative regulator of Notch signaling pathway. Shuttles between the cytoplasm and the nucleus and mediates the nuclear export of RBPJ/RBPSUH, thereby preventing the interaction between RBPJ/RBPSUH and NICD product of Notch proteins (Notch intracellular domain), leading to down-regulate Notch-mediated transcription. May play a role in neurogenesis. This is RBPJ-interacting and tubulin-associated protein 1 (RITA1) from Bos taurus (Bovine).